Here is a 226-residue protein sequence, read N- to C-terminus: Probable transaldolase (226 aa).

The active-site Schiff-base intermediate with substrate is K91.

The protein belongs to the transaldolase family. Type 3B subfamily.

The protein resides in the cytoplasm. It carries out the reaction D-sedoheptulose 7-phosphate + D-glyceraldehyde 3-phosphate = D-erythrose 4-phosphate + beta-D-fructose 6-phosphate. Its pathway is carbohydrate degradation; pentose phosphate pathway; D-glyceraldehyde 3-phosphate and beta-D-fructose 6-phosphate from D-ribose 5-phosphate and D-xylulose 5-phosphate (non-oxidative stage): step 2/3. Its function is as follows. Transaldolase is important for the balance of metabolites in the pentose-phosphate pathway. The polypeptide is Probable transaldolase (Chlorobium phaeobacteroides (strain DSM 266 / SMG 266 / 2430)).